Consider the following 590-residue polypeptide: Aspartate--tRNA(Asp/Asn) ligase (590 aa).

Glutamate 170 is a binding site for L-aspartate. The tract at residues 194–197 is aspartate; sequence QLFK. Arginine 216 lines the L-aspartate pocket. ATP is bound by residues 216 to 218 and glutamine 225; that span reads RDE. Histidine 448 lines the L-aspartate pocket. Position 482 (glutamate 482) interacts with ATP. Residue arginine 489 coordinates L-aspartate. Residue 534–537 participates in ATP binding; the sequence is GWDR. The interval 557-590 is disordered; sequence SGGGADPLTGAPAPITPQQRRESGIDAKPKKDGE. A compositionally biased stretch (basic and acidic residues) spans 575-590; sequence QRRESGIDAKPKKDGE.

The protein belongs to the class-II aminoacyl-tRNA synthetase family. Type 1 subfamily. Homodimer.

Its subcellular location is the cytoplasm. It carries out the reaction tRNA(Asx) + L-aspartate + ATP = L-aspartyl-tRNA(Asx) + AMP + diphosphate. Functionally, aspartyl-tRNA synthetase with relaxed tRNA specificity since it is able to aspartylate not only its cognate tRNA(Asp) but also tRNA(Asn). Reaction proceeds in two steps: L-aspartate is first activated by ATP to form Asp-AMP and then transferred to the acceptor end of tRNA(Asp/Asn). This chain is Aspartate--tRNA(Asp/Asn) ligase, found in Mycobacterium sp. (strain KMS).